The primary structure comprises 271 residues: Ribosomal RNA small subunit methyltransferase A (271 aa).

S-adenosyl-L-methionine-binding residues include His11, Leu13, Gly38, Glu58, Asp86, and Asn101.

Belongs to the class I-like SAM-binding methyltransferase superfamily. rRNA adenine N(6)-methyltransferase family. RsmA subfamily.

The protein resides in the cytoplasm. It carries out the reaction adenosine(1518)/adenosine(1519) in 16S rRNA + 4 S-adenosyl-L-methionine = N(6)-dimethyladenosine(1518)/N(6)-dimethyladenosine(1519) in 16S rRNA + 4 S-adenosyl-L-homocysteine + 4 H(+). Functionally, specifically dimethylates two adjacent adenosines (A1518 and A1519) in the loop of a conserved hairpin near the 3'-end of 16S rRNA in the 30S particle. May play a critical role in biogenesis of 30S subunits. The polypeptide is Ribosomal RNA small subunit methyltransferase A (Helicobacter pylori (strain ATCC 700392 / 26695) (Campylobacter pylori)).